The sequence spans 255 residues: 5'-nucleotidase SurE (255 aa).

A divalent metal cation is bound by residues aspartate 8, aspartate 9, serine 40, and asparagine 93.

The protein belongs to the SurE nucleotidase family. A divalent metal cation is required as a cofactor.

It localises to the cytoplasm. It carries out the reaction a ribonucleoside 5'-phosphate + H2O = a ribonucleoside + phosphate. Nucleotidase that shows phosphatase activity on nucleoside 5'-monophosphates. The sequence is that of 5'-nucleotidase SurE from Azorhizobium caulinodans (strain ATCC 43989 / DSM 5975 / JCM 20966 / LMG 6465 / NBRC 14845 / NCIMB 13405 / ORS 571).